Consider the following 74-residue polypeptide: ATP synthase subunit 9, mitochondrial (74 aa).

2 helical membrane passes run 8-28 (IGAGAATIASAGAAVGIGNVF) and 45-72 (LFGYAILGFALTEAIALFALMMAFLILF).

The protein belongs to the ATPase C chain family. As to quaternary structure, F-type ATPases have 2 components, CF(1) - the catalytic core - and CF(0) - the membrane proton channel. CF(1) has five subunits: alpha(3), beta(3), gamma(1), delta(1), epsilon(1). CF(0) has three main subunits: a, b and c.

The protein localises to the mitochondrion membrane. This protein is one of the chains of the nonenzymatic membrane component (F0) of mitochondrial ATPase. The polypeptide is ATP synthase subunit 9, mitochondrial (ATP9) (Pisum sativum (Garden pea)).